Reading from the N-terminus, the 156-residue chain is Transcription factor MafF (156 aa).

Positions 51–76 (RLKQRRRTLKNRGYAASCRVKRVCQK) are basic motif. A bZIP domain is found at 51–114 (RLKQRRRTLK…DALRGKCEAL (64 aa)). Positions 79–93 (LQKQKSELEREVDKL) are leucine-zipper.

The protein belongs to the bZIP family. Maf subfamily. In terms of assembly, monomer and homo- or heterodimer. Interacts with MIP. Forms high affinity heterodimers with members of the CNC-bZIP family such as NFE2L1/NRF1. As to expression, highly expressed in the lung, lower expression in the brain, thymus, liver, spleen, intestine, kidney, heart, muscle, and ovary. Not significantly expressed in hematopoietic cells.

The protein resides in the nucleus. Functionally, since they lack a putative transactivation domain, the small Mafs behave as transcriptional repressors when they dimerize among themselves. However, they seem to serve as transcriptional activators by dimerizing with other (usually larger) basic-zipper proteins, such as NFE2L1/NRF1, and recruiting them to specific DNA-binding sites. Interacts with the upstream promoter region of the oxytocin receptor gene. May be a transcriptional enhancer in the up-regulation of the oxytocin receptor gene at parturition. This is Transcription factor MafF (Maff) from Mus musculus (Mouse).